The chain runs to 1268 residues: Protein transport protein Sec24B (1268 aa).

Low complexity-rich tracts occupy residues 1–14 (MSAPAGSSHPAASA) and 21–48 (GGAAVSGAAAPAGPGAGPAPHQQNGPAQ). 4 disordered regions span residues 1–71 (MSAP…SGHY), 216–263 (APTV…LTWS), 303–345 (QNVQ…SVTQ), and 362–451 (NNQA…VVPQ). S2 is subject to N-acetylserine. Position 55 is a phosphoserine (S55). Polar residues predominate over residues 225–234 (NSFSGQNTAI). 3 stretches are compositionally biased toward low complexity: residues 245–255 (SQQHHQQQSLS), 311–332 (SPVVSTVLSGSSGSSSTRTPPT), and 365–375 (ASSAPTPLSST). Phosphothreonine is present on T329. Acidic residues predominate over residues 376-389 (SDDEEEEEEDEEAG). The span at 426-450 (APDPAPEPDPASAPAPASAPAPVVP) shows a compositional bias: pro residues. Residues C605, C608, C626, and C629 each contribute to the Zn(2+) site. The tract at residues 605-629 (CRSCRTYINPFVSFIDQRRWKCNLC) is zinc finger-like. The stretch at 1141–1213 (PQPPLQKLSA…TLSSERARSF (73 aa)) is one Gelsolin-like repeat. S1224 bears the Phosphoserine mark.

It belongs to the SEC23/SEC24 family. SEC24 subfamily. In terms of assembly, COPII is composed of at least five proteins: the Sec23/24 complex, the Sec13/31 complex and SAR1. Interacts with STING1; promoting STING1 translocation to COPII vesicles in a STEEP1-dependent manner. Interacts with RNF139. Interacts with TMED2 and TMED10. Interacts with CNIH4.

It is found in the cytoplasmic vesicle. The protein localises to the COPII-coated vesicle membrane. The protein resides in the endoplasmic reticulum membrane. It localises to the cytoplasm. Its subcellular location is the cytosol. Its function is as follows. Component of the coat protein complex II (COPII) which promotes the formation of transport vesicles from the endoplasmic reticulum (ER). The coat has two main functions, the physical deformation of the endoplasmic reticulum membrane into vesicles and the selection of cargo molecules for their transport to the Golgi complex. Plays a central role in cargo selection within the COPII complex and together with SEC24A may have a different specificity compared to SEC24C and SEC24D. May package preferentially cargos with cytoplasmic DxE or LxxLE motifs and may also recognize conformational epitopes. In Homo sapiens (Human), this protein is Protein transport protein Sec24B.